A 439-amino-acid polypeptide reads, in one-letter code: Trigger factor (439 aa).

The PPIase FKBP-type domain occupies 163-248; the sequence is GDRVTIDYRG…LNKLEAPKLP (86 aa).

The protein belongs to the FKBP-type PPIase family. Tig subfamily.

The protein localises to the cytoplasm. The catalysed reaction is [protein]-peptidylproline (omega=180) = [protein]-peptidylproline (omega=0). Functionally, involved in protein export. Acts as a chaperone by maintaining the newly synthesized protein in an open conformation. Functions as a peptidyl-prolyl cis-trans isomerase. The protein is Trigger factor of Nitrosomonas europaea (strain ATCC 19718 / CIP 103999 / KCTC 2705 / NBRC 14298).